The sequence spans 303 residues: Short chain dehydrogenase pigC (303 aa).

7 residues coordinate NADP(+): Ile45, Asp103, Asn130, Arg164, Tyr196, Lys200, and Thr231. The active-site Proton donor is Tyr196. The active-site Lowers pKa of active site Tyr is Lys200.

This sequence belongs to the short-chain dehydrogenases/reductases (SDR) family.

Its pathway is secondary metabolite biosynthesis. In terms of biological role, short chain dehydrogenase; part of the gene cluster that mediates the biosynthesis of azaphilone pigments (MonAzPs), a complex mixture of compounds with a common azaphilone skeleton very widely used as food colorants. Within the pathway, pigC intercepts the very reactive benzaldehyde produced by the nrPKS pigA to reduce the omega-1 carbonyl to the alcohol to provide the first stable enzyme-free MonAzPs intermediate, 6-(4-hydroxy-2-oxopentyl)-3-methyl-2,4-dioxocyclohexane carbaldehyde, also known as M7PKS-1. The first step of the pathway is performed by the nrPKS pigA that forms the hexaketide precursor from successive condensations of five malonyl-CoA units, with a simple acetyl-CoA starter unit. The role of esterase pigG is not clear, but it may play at most a supplementary role in the formation of the benzaldehyde produced by the pigA nrPKS. This very reactive benzaldehyde is intercepted by the pigC ketoreductase that to provide the first stable enzyme-free MonAzPs intermediate, M7PKS-1. The FAD-dependent monooxygenase pigN hydroxylates M7PKS-1 at C-4, which triggers the formation of the pyran ring. PigJ, pigK and pigD are involved in the acetylation of the pyran ring. PigJ and pigK form the two subunits of a dedicated fungal FAS that produces the side chain fatty acyl moiety of MonAzPs and pigD transfers the fatty acyl chain to the C-4 alcohol. PigM and pigO are involved in the elimination of the omega-1 alcohol. PigM acts as an O-acetyltransferase that synthesizes the putative O-11 acetyl intermediate whereas pigO eliminates acetic acid to yield an intermediate with a C10(11) double bond. The dehydration of the C-11 alcohol followed by the reduction of the C6(7) double bond by the NAD(P)H-dependent oxidoreductase pigE increases the electrophilicity of the C-5 ketone of the resulting acyl benzopyran. This in turn sets up the C-5 ketone for an intramolecular Knoevenagel aldol condensation with the C-20 enol of the side chain. This condensation affords the characteristic linear tricyclic carbon skeletons of the yellow pigments that serve as the common precursors for the classical yellow pigments monascin and ankaflavin, orange pigments rubopunctatin and monascorubrin, and red pigments ribropunctamine and monascorubramine. The FAD-dependent oxidoreductase pigF is especially invoved in the biosynthesis of orange and red pigments via desaturation of C6(7). In Monascus ruber (Mold), this protein is Short chain dehydrogenase pigC.